Here is a 491-residue protein sequence, read N- to C-terminus: Glutamyl-tRNA(Gln) amidotransferase subunit A (491 aa).

Residues Lys-76 and Ser-154 each act as charge relay system in the active site. The Acyl-ester intermediate role is filled by Ser-178.

It belongs to the amidase family. GatA subfamily. In terms of assembly, heterotrimer of A, B and C subunits.

The enzyme catalyses L-glutamyl-tRNA(Gln) + L-glutamine + ATP + H2O = L-glutaminyl-tRNA(Gln) + L-glutamate + ADP + phosphate + H(+). Its function is as follows. Allows the formation of correctly charged Gln-tRNA(Gln) through the transamidation of misacylated Glu-tRNA(Gln) in organisms which lack glutaminyl-tRNA synthetase. The reaction takes place in the presence of glutamine and ATP through an activated gamma-phospho-Glu-tRNA(Gln). This chain is Glutamyl-tRNA(Gln) amidotransferase subunit A, found in Cereibacter sphaeroides (strain ATCC 17029 / ATH 2.4.9) (Rhodobacter sphaeroides).